The following is a 272-amino-acid chain: Enoyl-[acyl-carrier-protein] reductase [NADH] 1 (272 aa).

NAD(+)-binding positions include Gly17, 23-24, Gln44, 68-69, and Ile96; these read SI and DV. Active-site proton acceptor residues include Tyr149 and Tyr159. Residues Lys166 and 195 to 199 contribute to the NAD(+) site; that span reads IKTLA.

This sequence belongs to the short-chain dehydrogenases/reductases (SDR) family. FabI subfamily.

It localises to the cell inner membrane. It catalyses the reaction a 2,3-saturated acyl-[ACP] + NAD(+) = a (2E)-enoyl-[ACP] + NADH + H(+). The protein operates within lipid metabolism; fatty acid biosynthesis. The polypeptide is Enoyl-[acyl-carrier-protein] reductase [NADH] 1 (fabI1) (Rhizobium meliloti (strain 1021) (Ensifer meliloti)).